A 229-amino-acid polypeptide reads, in one-letter code: Synaptogyrin-3 (229 aa).

Met1 bears the N-acetylmethionine mark. Positions 20 to 172 constitute an MARVEL domain; sequence FARRPQTLLR…LTVKALQRFR (153 aa). 4 helical membrane passes run 30-50, 70-90, 105-125, and 148-168; these read VASWVFSIAVFGPIVNEGYVN, FGVALGLGAFLACSCFLLLDV, VLLDLGFSGLWSFLWFVGFCF, and AVITFSFFSILSWVALTVKAL.

The protein belongs to the synaptogyrin family. As to quaternary structure, interacts (via N-terminus) with SLC6A3 (via N-terminus). May interact with VMAT2.

The protein localises to the cytoplasmic vesicle. The protein resides in the secretory vesicle. It is found in the synaptic vesicle membrane. Its subcellular location is the synapse. May play a role in regulated exocytosis. May indirectly regulate the activity of the plasma membrane dopamine transporter SLC6A3 and thereby regulate dopamine transport back from the synaptic cleft into the presynaptic terminal. The sequence is that of Synaptogyrin-3 from Bos taurus (Bovine).